The primary structure comprises 261 residues: Troponin T, slow skeletal muscle (261 aa).

The span at 1–30 (MSDTEEQEYEEEQAEDEEAVEEEAPEEPEP) shows a compositional bias: acidic residues. Disordered stretches follow at residues 1–61 (MSDT…ERVD) and 108–152 (ERAE…KKKV). S2 is modified (phosphoserine; by CK2). The segment covering 31-40 (VAEREEERPK) has biased composition (basic and acidic residues). The segment covering 42–54 (SRPVVPPLIPPKI) has biased composition (pro residues). The span at 108-148 (ERAEQQRFRTEKERERQAKLAEEKMRKEEEEAKKRAEDDAK) shows a compositional bias: basic and acidic residues.

This sequence belongs to the troponin T family. As to quaternary structure, interacts with TPM3. Expressed in soleus muscle. Isoform 4 is predominantly expressed in fast muscles.

Its function is as follows. Troponin T is the tropomyosin-binding subunit of troponin, the thin filament regulatory complex which confers calcium-sensitivity to striated muscle actomyosin ATPase activity. The chain is Troponin T, slow skeletal muscle (Tnnt1) from Rattus norvegicus (Rat).